We begin with the raw amino-acid sequence, 84 residues long: Beta/gamma-crystallin (84 aa).

2 Beta/gamma crystallin 'Greek key' domains span residues 2 to 42 (GKII…IVES) and 43 to 84 (GTWF…VKQQ). Residues 64–84 (KYPNPGSWGGNDDELSSVKQQ) form a disordered region.

Belongs to the beta/gamma-crystallin family. As to quaternary structure, monomer. In terms of tissue distribution, palps of larvae and otolith of the light-sensing ocellus.

Functionally, structural component of the neuroectodermal visual system. The sequence is that of Beta/gamma-crystallin from Ciona intestinalis (Transparent sea squirt).